A 90-amino-acid chain; its full sequence is Caspase recruitment domain-containing protein 18 (90 aa).

Residues 1-90 enclose the CARD domain; it reads MADQLLRKKR…PQLASKMGLH (90 aa).

As to quaternary structure, interacts with pro-CASP1. Interacts with CARD8. In terms of tissue distribution, primarily expressed in the heart and placenta.

Functionally, inhibits generation of IL-1-beta by interacting with caspase-1 and preventing its association with RIP2. Down-regulates the release of IL1B. In Homo sapiens (Human), this protein is Caspase recruitment domain-containing protein 18 (CARD18).